We begin with the raw amino-acid sequence, 302 residues long: RNA polymerase II holoenzyme cyclin-like subunit (302 aa).

Residues 53–142 (QQLIKLGKRM…VGECEFSLIS (90 aa)) enclose the Cyclin N-terminal domain.

This sequence belongs to the cyclin family. Cyclin C subfamily. Component of the srb8-11 complex, a regulatory module of the Mediator complex.

Its subcellular location is the nucleus. Its function is as follows. Component of the srb8-11 complex. The srb8-11 complex is a regulatory module of the Mediator complex which is itself involved in regulation of basal and activated RNA polymerase II-dependent transcription. The srb8-11 complex may be involved in the transcriptional repression of a subset of genes regulated by Mediator. It may inhibit the association of the Mediator complex with RNA polymerase II to form the holoenzyme complex. The srb8-11 complex phosphorylates the C-terminal domain (CTD) of the largest subunit of RNA polymerase II. This chain is RNA polymerase II holoenzyme cyclin-like subunit (ssn8), found in Emericella nidulans (strain FGSC A4 / ATCC 38163 / CBS 112.46 / NRRL 194 / M139) (Aspergillus nidulans).